The chain runs to 138 residues: ATP synthase epsilon chain (138 aa).

The span at 89–114 shows a compositional bias: basic and acidic residues; that stretch reads KDTAQQEWNEAQKRLDEASKSGDRQK. Positions 89-117 are disordered; it reads KDTAQQEWNEAQKRLDEASKSGDRQKQIQ.

Belongs to the ATPase epsilon chain family. As to quaternary structure, F-type ATPases have 2 components, CF(1) - the catalytic core - and CF(0) - the membrane proton channel. CF(1) has five subunits: alpha(3), beta(3), gamma(1), delta(1), epsilon(1). CF(0) has three main subunits: a, b and c.

It localises to the cellular thylakoid membrane. In terms of biological role, produces ATP from ADP in the presence of a proton gradient across the membrane. This Gloeothece citriformis (strain PCC 7424) (Cyanothece sp. (strain PCC 7424)) protein is ATP synthase epsilon chain.